The chain runs to 325 residues: tRNA U34 carboxymethyltransferase (325 aa).

The carboxy-S-adenosyl-L-methionine site is built by lysine 93, tryptophan 107, lysine 112, glycine 132, methionine 198, tyrosine 202, and arginine 317.

It belongs to the class I-like SAM-binding methyltransferase superfamily. CmoB family. As to quaternary structure, homotetramer.

It catalyses the reaction carboxy-S-adenosyl-L-methionine + 5-hydroxyuridine(34) in tRNA = 5-carboxymethoxyuridine(34) in tRNA + S-adenosyl-L-homocysteine + H(+). Its function is as follows. Catalyzes carboxymethyl transfer from carboxy-S-adenosyl-L-methionine (Cx-SAM) to 5-hydroxyuridine (ho5U) to form 5-carboxymethoxyuridine (cmo5U) at position 34 in tRNAs. This chain is tRNA U34 carboxymethyltransferase, found in Desulforapulum autotrophicum (strain ATCC 43914 / DSM 3382 / VKM B-1955 / HRM2) (Desulfobacterium autotrophicum).